Consider the following 72-residue polypeptide: MAFLKKSLFLVLFLGLVSLSICEKEKRQNEEDEDENEAANHEEGSEEKRGLFDIVKKVVGALGSLGKRNDLE.

The first 22 residues, 1-22 (MAFLKKSLFLVLFLGLVSLSIC), serve as a signal peptide directing secretion. The propeptide occupies 23-49 (EKEKRQNEEDEDENEAANHEEGSEEKR). Residues 27–47 (RQNEEDEDENEAANHEEGSEE) form a disordered region. Residues 38–47 (AANHEEGSEE) are compositionally biased toward basic and acidic residues. Leucine 65 is subject to Leucine amide. A propeptide spanning residues 69-72 (NDLE) is cleaved from the precursor.

In terms of processing, amidation is essential for antibacterial activity against Gram-positive bacteria. In terms of tissue distribution, expressed by the skin dorsal glands.

The protein resides in the secreted. It localises to the target cell membrane. Amphipathic alpha-helical antimicrobial peptide with weak to moderate activity against Gram-positive bacteria, and no activity against Gram-negative bacteria. Probably acts by disturbing membrane functions with its amphipathic structure. Strongly inhibits the formation of NO by neuronal nitric oxide synthase (nNOS) at micromolar concentrations. Acts by a non-competitive mechanism, probably by binding to calcium/calmodulin and as a consequence blocking calmodulin attachment to nNOS. The polypeptide is Aurein-2.2 (Ranoidea aurea (Green and golden bell frog)).